We begin with the raw amino-acid sequence, 157 residues long: Ciliary microtubule inner protein 5 (157 aa).

2 disordered regions span residues 1-57 (MGSR…SALG) and 92-124 (DPMG…AVGS). Residues 92–109 (DPMGNKKEPVKLPDHVPR) are compositionally biased toward basic and acidic residues.

The protein resides in the cell projection. The protein localises to the cilium. This Bos taurus (Bovine) protein is Ciliary microtubule inner protein 5 (CIMIP5).